A 325-amino-acid chain; its full sequence is Ribosomal RNA small subunit methyltransferase H (325 aa).

S-adenosyl-L-methionine-binding positions include 33 to 35 (GGH), D52, L87, D101, and Q108. Residues 285–325 (AEPAGEVEKADNPRAASVRLRAAERTAPNPDRTQPTIGGAS) are disordered. A compositionally biased stretch (polar residues) spans 315 to 325 (DRTQPTIGGAS).

Belongs to the methyltransferase superfamily. RsmH family.

It is found in the cytoplasm. It catalyses the reaction cytidine(1402) in 16S rRNA + S-adenosyl-L-methionine = N(4)-methylcytidine(1402) in 16S rRNA + S-adenosyl-L-homocysteine + H(+). Specifically methylates the N4 position of cytidine in position 1402 (C1402) of 16S rRNA. This is Ribosomal RNA small subunit methyltransferase H from Frankia alni (strain DSM 45986 / CECT 9034 / ACN14a).